The primary structure comprises 323 residues: Secreted frizzled-related protein 3 (323 aa).

An N-terminal signal peptide occupies residues 1–32 (MVCCGPGRMLLGWAGLLVLAALCLLQVPGAQA). An FZ domain is found at 33 to 150 (AACEPVRIPL…VYDRGVCISP (118 aa)). 5 cysteine pairs are disulfide-bonded: cysteine 35–cysteine 96, cysteine 43–cysteine 89, cysteine 80–cysteine 119, cysteine 108–cysteine 147, and cysteine 112–cysteine 136. Residue asparagine 49 is glycosylated (N-linked (GlcNAc...) asparagine). One can recognise an NTR domain in the interval 178–298 (CKCKPVRATQ…WDMKLRHLGL (121 aa)). Residues 299–323 (GKTDASDSTQNQKSGRNSNPRPARS) form a disordered region. Positions 304 to 323 (SDSTQNQKSGRNSNPRPARS) are enriched in polar residues.

The protein belongs to the secreted frizzled-related protein (sFRP) family. Interacts with MYOC. As to expression, expressed in kidney, brain, testis. Weak expression in spleen and heart.

It is found in the secreted. Soluble frizzled-related proteins (sFRPS) function as modulators of Wnt signaling through direct interaction with Wnts. They have a role in regulating cell growth and differentiation in specific cell types. SFRP3/FRZB appears to be involved in limb skeletogenesis. Antagonist of Wnt8 signaling. Regulates chondrocyte maturation and long bone development. In Mus musculus (Mouse), this protein is Secreted frizzled-related protein 3 (Frzb).